We begin with the raw amino-acid sequence, 205 residues long: Thiamine-phosphate synthase (205 aa).

Residues 37–41 (QVREK) and Asn-69 each bind 4-amino-2-methyl-5-(diphosphooxymethyl)pyrimidine. Positions 70 and 89 each coordinate Mg(2+). Ser-108 lines the 4-amino-2-methyl-5-(diphosphooxymethyl)pyrimidine pocket. 134-136 (TGS) is a 2-[(2R,5Z)-2-carboxy-4-methylthiazol-5(2H)-ylidene]ethyl phosphate binding site. 4-amino-2-methyl-5-(diphosphooxymethyl)pyrimidine is bound at residue Lys-137. 2-[(2R,5Z)-2-carboxy-4-methylthiazol-5(2H)-ylidene]ethyl phosphate-binding positions include Gly-165 and 185–186 (IS).

Belongs to the thiamine-phosphate synthase family. The cofactor is Mg(2+).

The enzyme catalyses 2-[(2R,5Z)-2-carboxy-4-methylthiazol-5(2H)-ylidene]ethyl phosphate + 4-amino-2-methyl-5-(diphosphooxymethyl)pyrimidine + 2 H(+) = thiamine phosphate + CO2 + diphosphate. It catalyses the reaction 2-(2-carboxy-4-methylthiazol-5-yl)ethyl phosphate + 4-amino-2-methyl-5-(diphosphooxymethyl)pyrimidine + 2 H(+) = thiamine phosphate + CO2 + diphosphate. The catalysed reaction is 4-methyl-5-(2-phosphooxyethyl)-thiazole + 4-amino-2-methyl-5-(diphosphooxymethyl)pyrimidine + H(+) = thiamine phosphate + diphosphate. Its pathway is cofactor biosynthesis; thiamine diphosphate biosynthesis; thiamine phosphate from 4-amino-2-methyl-5-diphosphomethylpyrimidine and 4-methyl-5-(2-phosphoethyl)-thiazole: step 1/1. Condenses 4-methyl-5-(beta-hydroxyethyl)thiazole monophosphate (THZ-P) and 2-methyl-4-amino-5-hydroxymethyl pyrimidine pyrophosphate (HMP-PP) to form thiamine monophosphate (TMP). The polypeptide is Thiamine-phosphate synthase (Clostridium botulinum (strain ATCC 19397 / Type A)).